Here is an 828-residue protein sequence, read N- to C-terminus: Periplasmic nitrate reductase 1 (828 aa).

The tat-type signal signal peptide spans 1–30; that stretch reads MKMTRRAFVKANAAASAAAVAGITLPASAA. In terms of domain architecture, 4Fe-4S Mo/W bis-MGD-type spans 41 to 97; it reads IKWDKAPCRFCGTGCSVLVGTQNGRVVATQGDPEAPVNKGLNCIKGYFLSKIMYGKD. [4Fe-4S] cluster contacts are provided by cysteine 48, cysteine 51, cysteine 55, and cysteine 83. Mo-bis(molybdopterin guanine dinucleotide) contacts are provided by residues lysine 85, glutamine 152, asparagine 177, cysteine 181, 214–221, 245–249, 264–266, methionine 374, glutamine 378, asparagine 484, 510–511, lysine 533, aspartate 560, and 718–727; these read WGSNMAEM, STYYH, QTD, SD, and TGRVLEHWHT. Residue phenylalanine 794 participates in substrate binding. Positions 802 and 819 each coordinate Mo-bis(molybdopterin guanine dinucleotide).

The protein belongs to the prokaryotic molybdopterin-containing oxidoreductase family. NasA/NapA/NarB subfamily. As to quaternary structure, component of the periplasmic nitrate reductase NapAB complex composed of NapA and NapB. [4Fe-4S] cluster serves as cofactor. Requires Mo-bis(molybdopterin guanine dinucleotide) as cofactor. Post-translationally, predicted to be exported by the Tat system. The position of the signal peptide cleavage has not been experimentally proven.

Its subcellular location is the periplasm. It carries out the reaction 2 Fe(II)-[cytochrome] + nitrate + 2 H(+) = 2 Fe(III)-[cytochrome] + nitrite + H2O. Its function is as follows. Catalytic subunit of the periplasmic nitrate reductase complex NapAB. Receives electrons from NapB and catalyzes the reduction of nitrate to nitrite. The protein is Periplasmic nitrate reductase 1 of Photobacterium profundum (strain SS9).